Consider the following 450-residue polypeptide: UDP-N-acetylmuramoylalanine--D-glutamate ligase (450 aa).

119-125 (GSNGKTT) contacts ATP.

Belongs to the MurCDEF family.

Its subcellular location is the cytoplasm. It carries out the reaction UDP-N-acetyl-alpha-D-muramoyl-L-alanine + D-glutamate + ATP = UDP-N-acetyl-alpha-D-muramoyl-L-alanyl-D-glutamate + ADP + phosphate + H(+). It functions in the pathway cell wall biogenesis; peptidoglycan biosynthesis. Cell wall formation. Catalyzes the addition of glutamate to the nucleotide precursor UDP-N-acetylmuramoyl-L-alanine (UMA). This is UDP-N-acetylmuramoylalanine--D-glutamate ligase from Bacillus cereus (strain ATCC 10987 / NRS 248).